The following is an 863-amino-acid chain: DNA ligase (863 aa).

NAD(+) contacts are provided by residues 76–80, 125–126, and Glu-159; these read DAAYD and SL. Lys-161 serves as the catalytic N6-AMP-lysine intermediate. Positions 182 and 221 each coordinate NAD(+). The disordered stretch occupies residues 237–256; it reads EDAGRPPFANPRNAAAGSLR. Residues 241 to 253 show a composition bias toward low complexity; sequence RPPFANPRNAAAG. NAD(+) contacts are provided by Lys-346 and Lys-370. Residues Cys-467, Cys-470, Cys-486, and Cys-492 each coordinate Zn(2+). The BRCT domain maps to 781-863; it reads GLPQTLEGKS…DTLLATGDVQ (83 aa).

This sequence belongs to the NAD-dependent DNA ligase family. LigA subfamily. It depends on Mg(2+) as a cofactor. Mn(2+) serves as cofactor.

It carries out the reaction NAD(+) + (deoxyribonucleotide)n-3'-hydroxyl + 5'-phospho-(deoxyribonucleotide)m = (deoxyribonucleotide)n+m + AMP + beta-nicotinamide D-nucleotide.. Functionally, DNA ligase that catalyzes the formation of phosphodiester linkages between 5'-phosphoryl and 3'-hydroxyl groups in double-stranded DNA using NAD as a coenzyme and as the energy source for the reaction. It is essential for DNA replication and repair of damaged DNA. This Bifidobacterium animalis subsp. lactis (strain AD011) protein is DNA ligase.